We begin with the raw amino-acid sequence, 489 residues long: Betaine aldehyde dehydrogenase (489 aa).

2 residues coordinate K(+): T26 and D93. 150–152 (GAW) is a binding site for NAD(+). The Charge relay system role is filled by K162. 176 to 179 (KPSE) is an NAD(+) binding site. V180 contacts K(+). Residue 229–232 (GVET) coordinates NAD(+). Residue L245 participates in K(+) binding. The Proton acceptor role is filled by E251. NAD(+) contacts are provided by G253, C285, and E386. C285 serves as the catalytic Nucleophile. A Cysteine sulfenic acid (-SOH) modification is found at C285. K(+) is bound by residues K456 and G459. Catalysis depends on E463, which acts as the Charge relay system.

It belongs to the aldehyde dehydrogenase family. As to quaternary structure, dimer of dimers. Requires K(+) as cofactor.

It catalyses the reaction betaine aldehyde + NAD(+) + H2O = glycine betaine + NADH + 2 H(+). The protein operates within amine and polyamine biosynthesis; betaine biosynthesis via choline pathway; betaine from betaine aldehyde: step 1/1. Involved in the biosynthesis of the osmoprotectant glycine betaine. Catalyzes the irreversible oxidation of betaine aldehyde to the corresponding acid. The sequence is that of Betaine aldehyde dehydrogenase from Burkholderia lata (strain ATCC 17760 / DSM 23089 / LMG 22485 / NCIMB 9086 / R18194 / 383).